Consider the following 100-residue polypeptide: Urease subunit gamma (100 aa).

This sequence belongs to the urease gamma subunit family. Heterotrimer of UreA (gamma), UreB (beta) and UreC (alpha) subunits. Three heterotrimers associate to form the active enzyme.

Its subcellular location is the cytoplasm. It carries out the reaction urea + 2 H2O + H(+) = hydrogencarbonate + 2 NH4(+). It participates in nitrogen metabolism; urea degradation; CO(2) and NH(3) from urea (urease route): step 1/1. The polypeptide is Urease subunit gamma (Pseudomonas putida (strain W619)).